The chain runs to 48 residues: ATP synthase protein 8 (48 aa).

Residues 16–36 (GFLLMTILLVLFSQFFLPMIL) form a helical membrane-spanning segment.

This sequence belongs to the ATPase protein 8 family. F-type ATPases have 2 components, CF(1) - the catalytic core - and CF(0) - the membrane proton channel.

It is found in the mitochondrion membrane. Functionally, mitochondrial membrane ATP synthase (F(1)F(0) ATP synthase or Complex V) produces ATP from ADP in the presence of a proton gradient across the membrane which is generated by electron transport complexes of the respiratory chain. F-type ATPases consist of two structural domains, F(1) - containing the extramembraneous catalytic core and F(0) - containing the membrane proton channel, linked together by a central stalk and a peripheral stalk. During catalysis, ATP synthesis in the catalytic domain of F(1) is coupled via a rotary mechanism of the central stalk subunits to proton translocation. Part of the complex F(0) domain. Minor subunit located with subunit a in the membrane. In Vanderwaltozyma polyspora (strain ATCC 22028 / DSM 70294 / BCRC 21397 / CBS 2163 / NBRC 10782 / NRRL Y-8283 / UCD 57-17) (Kluyveromyces polysporus), this protein is ATP synthase protein 8 (ATP8).